Consider the following 536-residue polypeptide: Mitogen-activated protein kinase kinase kinase mom-4 (536 aa).

Low complexity predominate over residues 1 to 20 (MDNSSQSKPSSSSSSHSPSP). The interval 1–34 (MDNSSQSKPSSSSSSHSPSPAAITPTQRTTRDSG) is disordered. Residues 51-305 (NLNSHYLGKG…SSECVEYFTL (255 aa)) form the Protein kinase domain. ATP-binding positions include 57–65 (LGKGTYGLV) and Lys-84. Residue Asp-176 is the Proton acceptor of the active site. The segment at 314–438 (SVPLSDSSTN…EHRRDSNDEE (125 aa)) is disordered. 2 stretches are compositionally biased toward polar residues: residues 315 to 325 (VPLSDSSTNGP) and 350 to 366 (NNRTPTASKLLNPQQPG). A compositionally biased stretch (basic and acidic residues) spans 405–438 (KNFRDRAKSEQRQPHRDARPPPPFEHRRDSNDEE).

Belongs to the protein kinase superfamily. STE Ser/Thr protein kinase family. MAP kinase kinase kinase subfamily. Interacts with, and is activated by, tap-1. Requires Mg(2+) as cofactor. May be autophosphorylated.

The catalysed reaction is L-seryl-[protein] + ATP = O-phospho-L-seryl-[protein] + ADP + H(+). It catalyses the reaction L-threonyl-[protein] + ATP = O-phospho-L-threonyl-[protein] + ADP + H(+). Part of the Wnt signaling pathway essential for the specification of the mesodermal cell fate in early embryos. Stimulates the wrm-1/lit-1-dependent phosphorylation of pop-1 and plays a role in the initial nuclear accumulation of wrm-1. The sequence is that of Mitogen-activated protein kinase kinase kinase mom-4 from Caenorhabditis elegans.